We begin with the raw amino-acid sequence, 686 residues long: MRLPDLRPWTSLLLVDAALLWLLQGPLGTLLPQGLPGLWLEGTLRLGGLWGLLKLRGLLGFVGTLLLPLCLATPLTVSLRALVAGASRAPPARVASAPWSWLLVGYGAAGLSWSLWAVLSPPGAQEKEQDQVNNKVLMWRLLKLSRPDLPLLVAAFFFLVLAVLGETLIPHYSGRVIDILGGDFDPHAFASAIFFMCLFSFGSSLSAGCRGGCFTYTMSRINLRIREQLFSSLLRQDLGFFQETKTGELNSRLSSDTTLMSNWLPLNANVLLRSLVKVVGLYGFMLSISPRLTLLSLLHMPFTIAAEKVYNTRHQEVLREIQDAVARAGQVVREAVGGLQTVRSFGAEEHEVCRYKEALEQCRQLYWRRDLERALYLLVRRVLHLGVQMLMLSCGLQQMQDGELTQGSLLSFMIYQESVGSYVQTLVYIYGDMLSNVGAAEKVFSYMDRQPNLPSPGTLAPTTLQGVVKFQDVSFAYPNRPDRPVLKGLTFTLRPGEVTALVGPNGSGKSTVAALLQNLYQPTGGQVLLDEKPISQYEHCYLHSQVVSVGQEPVLFSGSVRNNIAYGLQSCEDDKVMAAAQAAHADDFIQEMEHGIYTDVGEKGSQLAAGQKQRLAIARALVRDPRVLILDEATSALDVQCEQALQDWNSRGDRTVLVIAHRLQTVQRAHQILVLQEGKLQKLAQL.

The Lumenal portion of the chain corresponds to 1–6 (MRLPDL). Residues 7 to 27 (RPWTSLLLVDAALLWLLQGPL) form a helical membrane-spanning segment. The Cytoplasmic portion of the chain corresponds to 28 to 56 (GTLLPQGLPGLWLEGTLRLGGLWGLLKLR). A helical membrane pass occupies residues 57 to 77 (GLLGFVGTLLLPLCLATPLTV). The Lumenal portion of the chain corresponds to 78-98 (SLRALVAGASRAPPARVASAP). Residues 99–119 (WSWLLVGYGAAGLSWSLWAVL) form a helical membrane-spanning segment. Residues 120-148 (SPPGAQEKEQDQVNNKVLMWRLLKLSRPD) are Cytoplasmic-facing. A helical membrane pass occupies residues 149 to 169 (LPLLVAAFFFLVLAVLGETLI). In terms of domain architecture, ABC transmembrane type-1 spans 152–435 (LVAAFFFLVL…LVYIYGDMLS (284 aa)). Residues 170–187 (PHYSGRVIDILGGDFDPH) lie on the Lumenal side of the membrane. Residues 188–208 (AFASAIFFMCLFSFGSSLSAG) traverse the membrane as a helical segment. Residues 209–266 (CRGGCFTYTMSRINLRIREQLFSSLLRQDLGFFQETKTGELNSRLSSDTTLMSNWLPL) lie on the Cytoplasmic side of the membrane. A helical membrane pass occupies residues 267–287 (NANVLLRSLVKVVGLYGFMLS). The Lumenal portion of the chain corresponds to 288–293 (ISPRLT). Residues 294–314 (LLSLLHMPFTIAAEKVYNTRH) traverse the membrane as a helical segment. A part of the peptide-binding site region spans residues 301–389 (PFTIAAEKVY…RRVLHLGVQM (89 aa)). At 315–374 (QEVLREIQDAVARAGQVVREAVGGLQTVRSFGAEEHEVCRYKEALEQCRQLYWRRDLERA) the chain is on the cytoplasmic side. A helical transmembrane segment spans residues 375–395 (LYLLVRRVLHLGVQMLMLSCG). Topologically, residues 396-408 (LQQMQDGELTQGS) are lumenal. Residues 409–429 (LLSFMIYQESVGSYVQTLVYI) form a helical membrane-spanning segment. Positions 414 to 433 (IYQESVGSYVQTLVYIYGDM) are part of the peptide-binding site. Residues 430 to 686 (YGDMLSNVGA…EGKLQKLAQL (257 aa)) lie on the Cytoplasmic side of the membrane. An ABC transporter domain is found at 468 to 686 (VKFQDVSFAY…EGKLQKLAQL (219 aa)). 503-510 (GPNGSGKS) provides a ligand contact to ATP.

This sequence belongs to the ABC transporter superfamily. ABCB family. MHC peptide exporter (TC 3.A.1.209) subfamily. Heterodimer of TAP1 and TAP2 (TAP1-TAP2). A component of the peptide loading complex (PLC), interacts via TAPBP with MHCI heterodimer; this interaction mediates peptide-MHCI assembly. Recruits TAPBP in a 1:1 stoichiometry. Interacts with classical MHCI such as HLA-A*02-B2M; this interaction is obligatory for the loading of peptide epitopes. Interacts with non-classical MHCI molecules including HLA-E-B2M and HLA-F-B2M as well as PLC component CALR before the peptide loading. In terms of assembly, (Microbial infection) Interacts with Epstein-Barr virus BLNF2a. As to quaternary structure, (Microbial infection) Interacts with herpes simplex virus US12/ICP47. (Microbial infection) Interacts with adenovirus E3-19K glycoprotein, which binds TAP1-TAP2 and acts as a TAPBP inhibitor, preventing TAP1-TAP2 association with MHCI. It depends on Mg(2+) as a cofactor.

Its subcellular location is the endoplasmic reticulum membrane. The catalysed reaction is a peptide antigen(in) + ATP + H2O = a peptide antigen(out) + ADP + phosphate + H(+). With respect to regulation, inhibited at high ER lumenal peptide concentrations. (Microbial infection) Inhibited by herpes simplex virus US12/ICP47 protein, which blocks the peptide-binding site of TAP1-TAP2. Its activity is regulated as follows. (Microbial infection) Inhibited by human cytomegalovirus US6 glycoprotein, which binds to the lumenal side of TAP1-TAP2 complex and inhibits peptide translocation by specifically blocking ATP-binding and preventing TAP1-TAP2 conformational rearrangement induced by peptide binding. In terms of biological role, ABC transporter associated with antigen processing. In complex with TAP1 mediates unidirectional translocation of peptide antigens from cytosol to endoplasmic reticulum (ER) for loading onto MHC class I (MHCI) molecules. Uses the chemical energy of ATP to export peptides against the concentration gradient. During the transport cycle alternates between 'inward-facing' state with peptide binding site facing the cytosol to 'outward-facing' state with peptide binding site facing the ER lumen. Peptide antigen binding to ATP-loaded TAP1-TAP2 induces a switch to hydrolysis-competent 'outward-facing' conformation ready for peptide loading onto nascent MHCI molecules. Subsequently ATP hydrolysis resets the transporter to the 'inward facing' state for a new cycle. Typically transports intracellular peptide antigens of 8 to 13 amino acids that arise from cytosolic proteolysis via IFNG-induced immunoproteasome. Binds peptides with free N- and C-termini, the first three and the C-terminal residues being critical. Preferentially selects peptides having a highly hydrophobic residue at position 3 and hydrophobic or charged residues at the C-terminal anchor. Proline at position 2 has the most destabilizing effect. As a component of the peptide loading complex (PLC), acts as a molecular scaffold essential for peptide-MHCI assembly and antigen presentation. This is Antigen peptide transporter 2 from Homo sapiens (Human).